The chain runs to 194 residues: Large ribosomal subunit protein bL27c (194 aa).

A chloroplast-targeting transit peptide spans 1 to 57; that stretch reads MAVTTSMSFNLMASFRGMSLSSSSSSSFFKGEFGPSSLRLPNKSPLSVSPFPLTIES. Residues 57–76 are disordered; sequence SAHKKGAGSTKNGRDSKGQR.

In terms of assembly, component of the chloroplast large ribosomal subunit (LSU). Mature 70S chloroplast ribosomes of higher plants consist of a small (30S) and a large (50S) subunit. The 30S small subunit contains 1 molecule of ribosomal RNA (16S rRNA) and 24 different proteins. The 50S large subunit contains 3 rRNA molecules (23S, 5S and 4.5S rRNA) and 33 different proteins.

It is found in the plastid. It localises to the chloroplast. In terms of biological role, component of the chloroplast ribosome (chloro-ribosome), a dedicated translation machinery responsible for the synthesis of chloroplast genome-encoded proteins, including proteins of the transcription and translation machinery and components of the photosynthetic apparatus. This is Large ribosomal subunit protein bL27c (RPL27) from Spinacia oleracea (Spinach).